The primary structure comprises 570 residues: Molecular chaperone MKKS (570 aa).

Position 192 to 199 (192 to 199 (GHIILGKS)) interacts with ATP. A substrate-binding apical domain region spans residues 198–370 (KSLIVPLKGQ…FHLIPNEATI (173 aa)).

It belongs to the TCP-1 chaperonin family. As to quaternary structure, component of a complex composed at least of MKKS, BBS10, BBS12, TCP1, CCT2, CCT3, CCT4, CCT5 and CCT8. Interacts with STUB1. Interacts with BBS2 (via coiled coil domain). Interacts with CCDC28B. Interacts with BBS12. Interacts with SMARCC1, a component of the SWI/SNF complexes; the interaction takes place predominantly in the cytoplasm and may modulate SMARCC1 location. Interacts with DLEC1. As to expression, widely expressed in adult and fetal tissues.

It is found in the cytoplasm. Its subcellular location is the cytoskeleton. The protein resides in the microtubule organizing center. The protein localises to the centrosome. It localises to the cytosol. It is found in the nucleus. Functionally, probable molecular chaperone that assists the folding of proteins upon ATP hydrolysis. Plays a role in the assembly of BBSome, a complex involved in ciliogenesis regulating transports vesicles to the cilia. May play a role in protein processing in limb, cardiac and reproductive system development. May play a role in cytokinesis. The polypeptide is Molecular chaperone MKKS (Homo sapiens (Human)).